A 284-amino-acid polypeptide reads, in one-letter code: Probable endonuclease 4 (284 aa).

Zn(2+) is bound by residues His69, His109, Glu145, Asp179, His182, His216, Asp229, His231, and Glu261.

This sequence belongs to the AP endonuclease 2 family. Zn(2+) serves as cofactor.

It catalyses the reaction Endonucleolytic cleavage to 5'-phosphooligonucleotide end-products.. Endonuclease IV plays a role in DNA repair. It cleaves phosphodiester bonds at apurinic or apyrimidinic (AP) sites, generating a 3'-hydroxyl group and a 5'-terminal sugar phosphate. The protein is Probable endonuclease 4 of Chlorobium phaeobacteroides (strain BS1).